A 651-amino-acid polypeptide reads, in one-letter code: Intraflagellar transport protein 70A (651 aa).

TPR repeat units lie at residues 8–41 (DGEY…QYRS), 42–75 (RAGL…SPEV), 140–173 (PESE…MGYK), 175–207 (DLSF…GIRE), 372–405 (LTEQ…YDET), 410–443 (IPVL…CNEH), and 445–478 (IWKL…HYDN). A coiled-coil region spans residues 494–521 (YIMTSQNEEAEELMRKIEKEEEQIAYEN). The TPR 8 repeat unit spans residues 530 to 563 (CIVNLVIGTLYCAKGNYEFGISRVIKSLEPYNKK).

It belongs to the TTC30/dfy-1/fleer family.

The protein localises to the cell projection. Its subcellular location is the cilium. Functionally, required for polyglutamylation of axonemal tubulin. Plays a role in anterograde intraflagellar transport (IFT), the process by which cilia precursors are transported from the base of the cilium to the site of their incorporation at the tip. The polypeptide is Intraflagellar transport protein 70A (ift70a) (Xenopus laevis (African clawed frog)).